We begin with the raw amino-acid sequence, 338 residues long: Solute-binding protein Rfer_1840 (338 aa).

An N-terminal signal peptide occupies residues 1 to 25 (MQRRQLLQSMGGLAASTMPFSLAFA). Malonate contacts are provided by residues arginine 47, tyrosine 100, arginine 175, serine 197, 214–218 (TSSTS), and glutamate 244.

The protein belongs to the bacterial solute-binding protein 7 family. The complex is comprised of an extracytoplasmic solute-binding protein and a heteromeric permease formed by two transmembrane proteins.

It localises to the periplasm. Solute-binding protein that binds malonate (in vitro). Probably part of a tripartite ATP-independent periplasmic (TRAP) transport system that mediates solute transport into the cytoplasm. This chain is Solute-binding protein Rfer_1840, found in Albidiferax ferrireducens (strain ATCC BAA-621 / DSM 15236 / T118) (Rhodoferax ferrireducens).